The chain runs to 458 residues: Exodeoxyribonuclease 7 large subunit (458 aa).

This sequence belongs to the XseA family. As to quaternary structure, heterooligomer composed of large and small subunits.

Its subcellular location is the cytoplasm. The enzyme catalyses Exonucleolytic cleavage in either 5'- to 3'- or 3'- to 5'-direction to yield nucleoside 5'-phosphates.. Functionally, bidirectionally degrades single-stranded DNA into large acid-insoluble oligonucleotides, which are then degraded further into small acid-soluble oligonucleotides. The polypeptide is Exodeoxyribonuclease 7 large subunit (Halalkalibacterium halodurans (strain ATCC BAA-125 / DSM 18197 / FERM 7344 / JCM 9153 / C-125) (Bacillus halodurans)).